A 633-amino-acid chain; its full sequence is MAKVVGIDLGTTNSCVAVMEGGKPTVIANAEGFRTTPSVVAFAKNGDTLVGQIAKRQAVMNPENTFYSVKRFIGRRYDEVTNEATEVSYKVLSSGGNVKVDSPGAGKQFAPEEISAKVLRKLVEDASKYLGETVTQAVITVPAYFNDSQRQATKDAGKIAGIEVMRIINEPTAASLAYGFDKKSNETILVFDLGGGTFDVSVLEVGDGVFEVLATSGDTHLGGDDFDKKIVDFLAEQFRKDEGIDLRKDKQALQRLTEAAEKAKIELSSVTQAEINLPFITATQDGPKHLDMTLTRAKFEELCADLIDRCRIPVEQALRDAKLKKENIDEVVLVGGSTRIPAVQQLVKNLLGREPNQTVNPDEVVAVGAAIQAGVLGGEVTGILLLDVTPLSLGVETLGGVMTKIIPRNTTIPTKKSEVFSTAVDGQTNVEIHVLQGEREFANDNKSLGTFRLDGIPPAPRGVPQIEVVFDIDANGILNVTAKDKGTGKEQSISITGASTLDKTDIDRMVREAEQNASSDKERREKIERKNQADSLAYQAEKQLQELGDKVPEADKTKVEGLVKDLREAVAKEDDEQIKKLTPELQQALFAVGSNIYQQAGGGAAPGAAPQDGGTTSSDGGDDVIDADFTETK.

The residue at position 197 (Thr-197) is a Phosphothreonine; by autocatalysis. Residues Ala-513–Gln-532 are compositionally biased toward basic and acidic residues. Disordered regions lie at residues Ala-513–Asp-534 and Gln-598–Lys-633. A compositionally biased stretch (low complexity) spans Pro-606–Asp-619. Positions Gly-620 to Lys-633 are enriched in acidic residues.

Belongs to the heat shock protein 70 family.

Functionally, acts as a chaperone. In Nostoc sp. (strain PCC 7120 / SAG 25.82 / UTEX 2576), this protein is Chaperone protein dnaK2 (dnaK2).